Reading from the N-terminus, the 123-residue chain is Large ribosomal subunit protein bL12 (123 aa).

It belongs to the bacterial ribosomal protein bL12 family. In terms of assembly, homodimer. Part of the ribosomal stalk of the 50S ribosomal subunit. Forms a multimeric L10(L12)X complex, where L10 forms an elongated spine to which 2 to 4 L12 dimers bind in a sequential fashion. Binds GTP-bound translation factors.

Functionally, forms part of the ribosomal stalk which helps the ribosome interact with GTP-bound translation factors. Is thus essential for accurate translation. In Geobacillus kaustophilus (strain HTA426), this protein is Large ribosomal subunit protein bL12.